A 262-amino-acid chain; its full sequence is Phosphatidylserine decarboxylase proenzyme (262 aa).

Active-site charge relay system; for autoendoproteolytic cleavage activity residues include Asp-86, His-142, and Ser-226. Catalysis depends on Ser-226, which acts as the Schiff-base intermediate with substrate; via pyruvic acid; for decarboxylase activity. Ser-226 bears the Pyruvic acid (Ser); by autocatalysis mark.

The protein belongs to the phosphatidylserine decarboxylase family. PSD-B subfamily. Prokaryotic type I sub-subfamily. Heterodimer of a large membrane-associated beta subunit and a small pyruvoyl-containing alpha subunit. It depends on pyruvate as a cofactor. Is synthesized initially as an inactive proenzyme. Formation of the active enzyme involves a self-maturation process in which the active site pyruvoyl group is generated from an internal serine residue via an autocatalytic post-translational modification. Two non-identical subunits are generated from the proenzyme in this reaction, and the pyruvate is formed at the N-terminus of the alpha chain, which is derived from the carboxyl end of the proenzyme. The autoendoproteolytic cleavage occurs by a canonical serine protease mechanism, in which the side chain hydroxyl group of the serine supplies its oxygen atom to form the C-terminus of the beta chain, while the remainder of the serine residue undergoes an oxidative deamination to produce ammonia and the pyruvoyl prosthetic group on the alpha chain. During this reaction, the Ser that is part of the protease active site of the proenzyme becomes the pyruvoyl prosthetic group, which constitutes an essential element of the active site of the mature decarboxylase.

It localises to the cell membrane. The enzyme catalyses a 1,2-diacyl-sn-glycero-3-phospho-L-serine + H(+) = a 1,2-diacyl-sn-glycero-3-phosphoethanolamine + CO2. It functions in the pathway phospholipid metabolism; phosphatidylethanolamine biosynthesis; phosphatidylethanolamine from CDP-diacylglycerol: step 2/2. Its function is as follows. Catalyzes the formation of phosphatidylethanolamine (PtdEtn) from phosphatidylserine (PtdSer). The sequence is that of Phosphatidylserine decarboxylase proenzyme from Bacillus anthracis.